We begin with the raw amino-acid sequence, 168 residues long: Plastocyanin A, chloroplastic (168 aa).

The transit peptide at 1 to 69 directs the protein to the chloroplast; it reads MATVTSAAVS…SAMIASNAMA (69 aa). The Plastocyanin-like domain occupies 70-168; it reads IDVLLGADDG…AGMVGKVTVN (99 aa). Cu cation contacts are provided by H106, C153, H156, and M161.

The protein belongs to the plastocyanin family. It depends on Cu(2+) as a cofactor.

The protein localises to the plastid. It is found in the chloroplast thylakoid membrane. Participates in electron transfer between P700 and the cytochrome b6-f complex in photosystem I. This chain is Plastocyanin A, chloroplastic (PETE), found in Populus nigra (Lombardy poplar).